The following is a 235-amino-acid chain: Large ribosomal subunit protein uL1 (235 aa).

This sequence belongs to the universal ribosomal protein uL1 family. Part of the 50S ribosomal subunit.

In terms of biological role, binds directly to 23S rRNA. The L1 stalk is quite mobile in the ribosome, and is involved in E site tRNA release. Its function is as follows. Protein L1 is also a translational repressor protein, it controls the translation of the L11 operon by binding to its mRNA. This chain is Large ribosomal subunit protein uL1, found in Mycolicibacterium paratuberculosis (strain ATCC BAA-968 / K-10) (Mycobacterium paratuberculosis).